A 251-amino-acid polypeptide reads, in one-letter code: Hydroxyacylglutathione hydrolase (251 aa).

Residues histidine 53, histidine 55, aspartate 57, histidine 58, histidine 110, aspartate 127, and histidine 165 each contribute to the Zn(2+) site.

This sequence belongs to the metallo-beta-lactamase superfamily. Glyoxalase II family. In terms of assembly, monomer. The cofactor is Zn(2+).

The catalysed reaction is an S-(2-hydroxyacyl)glutathione + H2O = a 2-hydroxy carboxylate + glutathione + H(+). The protein operates within secondary metabolite metabolism; methylglyoxal degradation; (R)-lactate from methylglyoxal: step 2/2. Its function is as follows. Thiolesterase that catalyzes the hydrolysis of S-D-lactoyl-glutathione to form glutathione and D-lactic acid. This Salmonella gallinarum (strain 287/91 / NCTC 13346) protein is Hydroxyacylglutathione hydrolase.